The primary structure comprises 470 residues: Acetyl-CoA decarbonylase/synthase complex subunit beta 2 (470 aa).

[Ni-Fe-S] cluster contacts are provided by Cys-189, Cys-192, Cys-278, and Cys-280.

It belongs to the CdhC family. In terms of assembly, monomer. The ACDS complex is made up of alpha, epsilon, beta, gamma and delta chains with a probable stoichiometry of (alpha(2)epsilon(2))(4)-beta(8)-(gamma(1)delta(1))(8) (Potential). Requires [Ni-Fe-S] cluster as cofactor.

It carries out the reaction Co(I)-[corrinoid Fe-S protein] + acetyl-CoA + H(+) = methyl-Co(III)-[corrinoid Fe-S protein] + CO + CoA. The protein operates within one-carbon metabolism; methanogenesis from acetate. Its function is as follows. Part of a complex that catalyzes the reversible cleavage of acetyl-CoA, allowing growth on acetate as sole source of carbon and energy. The alpha-epsilon complex generates CO from CO(2), while the beta subunit (this protein) combines the CO with CoA and a methyl group to form acetyl-CoA. The methyl group, which is incorporated into acetyl-CoA, is transferred to the beta subunit by a corrinoid iron-sulfur protein (the gamma-delta complex). This chain is Acetyl-CoA decarbonylase/synthase complex subunit beta 2 (cdhC2), found in Methanosarcina acetivorans (strain ATCC 35395 / DSM 2834 / JCM 12185 / C2A).